We begin with the raw amino-acid sequence, 195 residues long: Imidazoleglycerol-phosphate dehydratase (195 aa).

This sequence belongs to the imidazoleglycerol-phosphate dehydratase family.

Its subcellular location is the cytoplasm. It catalyses the reaction D-erythro-1-(imidazol-4-yl)glycerol 3-phosphate = 3-(imidazol-4-yl)-2-oxopropyl phosphate + H2O. It participates in amino-acid biosynthesis; L-histidine biosynthesis; L-histidine from 5-phospho-alpha-D-ribose 1-diphosphate: step 6/9. The sequence is that of Imidazoleglycerol-phosphate dehydratase from Bacillus cytotoxicus (strain DSM 22905 / CIP 110041 / 391-98 / NVH 391-98).